The following is an 814-amino-acid chain: Threonine--tRNA ligase 2, cytoplasmic (814 aa).

Residues 2–72 (AAHIAQRLTV…SLREEQERAR (71 aa)) are a coiled coil. A disordered region spans residues 62 to 142 (RSLREEQERA…GHKQEGPCAP (81 aa)). 3 stretches are compositionally biased toward basic and acidic residues: residues 63 to 72 (SLREEQERAR), 88 to 102 (EEPK…EKGQ), and 119 to 137 (GNKK…HKQE). Residues 172–234 (KPIKITLADG…EQDSNVELLK (63 aa)) form the TGS domain. The Nuclear localization signal motif lies at 798-804 (KLKTLKK).

Belongs to the class-II aminoacyl-tRNA synthetase family.

It is found in the cytoplasm. It localises to the nucleus. The catalysed reaction is tRNA(Thr) + L-threonine + ATP = L-threonyl-tRNA(Thr) + AMP + diphosphate + H(+). Catalyzes the attachment of threonine to tRNA(Thr) in a two-step reaction: threonine is first activated by ATP to form Thr-AMP and then transferred to the acceptor end of tRNA(Thr). Also edits incorrectly charged tRNA(Thr) via its editing domain, at the post-transfer stage. In Xenopus tropicalis (Western clawed frog), this protein is Threonine--tRNA ligase 2, cytoplasmic (tars3).